The primary structure comprises 573 residues: Methionine--tRNA ligase (573 aa).

Residues 10 to 20 (PYVNSVPHLGN) carry the 'HIGH' region motif. Zn(2+) is bound by residues Cys143, Cys146, Cys156, and Cys159. The 'KMSKS' region motif lies at 333 to 337 (KFSKS). Position 336 (Lys336) interacts with ATP.

Belongs to the class-I aminoacyl-tRNA synthetase family. MetG type 1 subfamily. Zn(2+) is required as a cofactor.

Its subcellular location is the cytoplasm. The catalysed reaction is tRNA(Met) + L-methionine + ATP = L-methionyl-tRNA(Met) + AMP + diphosphate. In terms of biological role, is required not only for elongation of protein synthesis but also for the initiation of all mRNA translation through initiator tRNA(fMet) aminoacylation. This Saccharolobus islandicus (strain M.14.25 / Kamchatka #1) (Sulfolobus islandicus) protein is Methionine--tRNA ligase.